The following is a 766-amino-acid chain: 5-methyltetrahydropteroyltriglutamate--homocysteine methyltransferase (766 aa).

5-methyltetrahydropteroyltri-L-glutamate contacts are provided by residues 23–26 (RELK) and Lys121. L-homocysteine is bound by residues 438 to 440 (IGS) and Glu491. L-methionine is bound by residues 438 to 440 (IGS) and Glu491. Residues 522 to 523 (RC) and Trp568 contribute to the 5-methyltetrahydropteroyltri-L-glutamate site. Asp606 is a binding site for L-homocysteine. Residue Asp606 coordinates L-methionine. Glu612 contacts 5-methyltetrahydropteroyltri-L-glutamate. Zn(2+) is bound by residues His648, Cys650, and Glu672. His701 acts as the Proton donor in catalysis. Residue Cys733 coordinates Zn(2+).

Belongs to the vitamin-B12 independent methionine synthase family. Zn(2+) is required as a cofactor.

The catalysed reaction is 5-methyltetrahydropteroyltri-L-glutamate + L-homocysteine = tetrahydropteroyltri-L-glutamate + L-methionine. It functions in the pathway amino-acid biosynthesis; L-methionine biosynthesis via de novo pathway; L-methionine from L-homocysteine (MetE route): step 1/1. Functionally, catalyzes the transfer of a methyl group from 5-methyltetrahydrofolate to homocysteine resulting in methionine formation. The chain is 5-methyltetrahydropteroyltriglutamate--homocysteine methyltransferase from Photobacterium profundum (strain SS9).